Reading from the N-terminus, the 681-residue chain is Methionine--tRNA ligase (681 aa).

The short motif at 14–24 (PYANGSIHLGH) is the 'HIGH' region element. Zn(2+) is bound by residues Cys145, Cys148, Cys158, and Cys161. Positions 331–335 (KMSKS) match the 'KMSKS' region motif. Residue Lys334 participates in ATP binding. Residues 579–681 (AFAAIDLRVA…SGAKPGQRIK (103 aa)) form the tRNA-binding domain.

It belongs to the class-I aminoacyl-tRNA synthetase family. MetG type 1 subfamily. Homodimer. Zn(2+) is required as a cofactor.

The protein localises to the cytoplasm. The catalysed reaction is tRNA(Met) + L-methionine + ATP = L-methionyl-tRNA(Met) + AMP + diphosphate. Is required not only for elongation of protein synthesis but also for the initiation of all mRNA translation through initiator tRNA(fMet) aminoacylation. The chain is Methionine--tRNA ligase from Pseudomonas fluorescens (strain ATCC BAA-477 / NRRL B-23932 / Pf-5).